A 282-amino-acid polypeptide reads, in one-letter code: Protein GAM-1 (282 aa).

The BC-box-like motif lies at 251–260; that stretch reads SLQDWARLGV.

In terms of assembly, interacts with host HDAC1. Interacts with host E1-activating enzyme (SAE1/UBA2 heterodimer). Interacts with host retinoblastoma protein. Seems to form a complex with host E4F1 and HDAC1. Seems to form complexes with either CUL2-elongin BC complex-RBX1 or CUL5-elongin BC complex-RBX1. Interacts with TCEB1/Elongin-C, CUL2 and CUL5 in vitro.

The protein localises to the host nucleus. In terms of biological role, early protein essential for viral replication. Strong and global transcriptional activator of both viral and cellular genes. Activates transcription by blocking host retinoblastoma protein (RB) and inhibiting the SUMO pathway. Inhibition of host RB leads to the activation of E2F1-dependent transcription and, in particular, of E2F1-regulated S-phase genes. Stimulation of progression from G1 to S phase allows the virus to efficiently use the cellular DNA replicating machinery to achieve viral genome replication. Blocks the SUMO pathway by targeting the E1 enzyme (SAE1/UBA2 heterodimer) to the ubiquitin-proteasome machinery. Mediates SAE1 degradation possibly through the formation of complexes with either CUL2-elongin BC complex-RBX1 or CUL5-elongin BC complex-RBX1. The degradation of UBA2 is probably a consequent effect of SAE1 disappearance. Inhibits HDAC1 sumoylation, thereby interfering with histone deacetylation mediated by HDAC1, leading to activation of transcription. Mediates induction of heat-shock response. Seems to have an antiapoptotic function. The polypeptide is Protein GAM-1 (Galliformes (FAdV-1)).